We begin with the raw amino-acid sequence, 315 residues long: Olfactory receptor 5M10 (315 aa).

Over 1-25 (MLSPNHTIVTEFILLGLTDDPVLEK) the chain is Extracellular. N5 carries an N-linked (GlcNAc...) asparagine glycan. A helical transmembrane segment spans residues 26 to 46 (ILFGVFLAIYLITLAGNLCMI). Residues 47 to 54 (LLIRTNSQ) are Cytoplasmic-facing. A helical transmembrane segment spans residues 55-75 (LQTPMYFFLGHLSFVDICYSS). At 76 to 99 (NVTPNMLHNFLSEQKTISYAGCFT) the chain is on the extracellular side. Cysteines 97 and 189 form a disulfide. Residues 100–120 (QCLLFIALVITEFYFLASMAL) traverse the membrane as a helical segment. The Cytoplasmic portion of the chain corresponds to 121-139 (DRYVAICSPLHYSSRMSKN). The helical transmembrane segment at 140 to 160 (ICISLVTVPYMYGFLNGLSQT) threads the bilayer. At 161 to 196 (LLTFHLSFCGSLEINHFYCADPPLIMLACSDTRVKK) the chain is on the extracellular side. Residues 197–217 (MAMFVVAGFTLSSSLFIILLS) traverse the membrane as a helical segment. Residues 218 to 237 (YLFIFAAIFRIRSAEGRHKA) lie on the Cytoplasmic side of the membrane. The helical transmembrane segment at 238-258 (FSTCASHLTIVTLFYGTLFCM) threads the bilayer. Topologically, residues 259–271 (YVRPPSEKSVEES) are extracellular. A helical transmembrane segment spans residues 272 to 292 (KIIAVFYTFLSPMLNPLIYSL). Topologically, residues 293 to 315 (RNRDVILAIQQMIRGKSFCKIAV) are cytoplasmic.

The protein belongs to the G-protein coupled receptor 1 family.

The protein localises to the cell membrane. Functionally, odorant receptor. The polypeptide is Olfactory receptor 5M10 (OR5M10) (Homo sapiens (Human)).